A 54-amino-acid polypeptide reads, in one-letter code: Light-harvesting protein B-800/850 alpha chain (54 aa).

Residues 1 to 14 (MTNGKIWLVVKPTV) are Cytoplasmic-facing. A helical transmembrane segment spans residues 15–35 (GVPLFLSAAVIASVVIHAAVL). His-31 serves as a coordination point for a bacteriochlorophyll. Residues 36–54 (TTTTWLPAYYQGSAAVAAE) are Periplasmic-facing.

Belongs to the antenna complex alpha subunit family. As to quaternary structure, the core complex is formed by different alpha and beta chains, binding bacteriochlorophyll molecules, and arranged most probably in tetrameric structures disposed around the reaction center. The non-pigmented gamma chains may constitute additional components.

It is found in the cell inner membrane. Its function is as follows. Antenna complexes are light-harvesting systems, which transfer the excitation energy to the reaction centers. This is Light-harvesting protein B-800/850 alpha chain (pucA) from Cereibacter sphaeroides (Rhodobacter sphaeroides).